A 255-amino-acid chain; its full sequence is MKLIPAIDLMNGKCVRLFKGDFNKKKDFSREPYEQAKYWENEGAKCIHIVDLDAAKTGIPTNDQSIQKIVKSVNIPIQIGGGIRSLERIKQLFSYGVDKVIMGTSAIENKELVKSLSTKFPSRIIIGIDAKEGKVSTRGWLKQSDVLATELVQEFSSFKIASFIVTDINTDGTLEGTNEVFIKKILEITDIPVIASGGVGSISDLLSLTKFEDSGLYGVIVGKALYENKFTISEASNILSTERINDIPINKDYYA.

The Proton acceptor role is filled by Asp-8. Asp-129 functions as the Proton donor in the catalytic mechanism.

Belongs to the HisA/HisF family.

Its subcellular location is the cytoplasm. It catalyses the reaction 1-(5-phospho-beta-D-ribosyl)-5-[(5-phospho-beta-D-ribosylamino)methylideneamino]imidazole-4-carboxamide = 5-[(5-phospho-1-deoxy-D-ribulos-1-ylimino)methylamino]-1-(5-phospho-beta-D-ribosyl)imidazole-4-carboxamide. The protein operates within amino-acid biosynthesis; L-histidine biosynthesis; L-histidine from 5-phospho-alpha-D-ribose 1-diphosphate: step 4/9. The protein is 1-(5-phosphoribosyl)-5-[(5-phosphoribosylamino)methylideneamino] imidazole-4-carboxamide isomerase of Prochlorococcus marinus subsp. pastoris (strain CCMP1986 / NIES-2087 / MED4).